Reading from the N-terminus, the 763-residue chain is Phosphoglycerol transferase I (763 aa).

The next 4 helical transmembrane spans lie at 4 to 19 (LLSV…IYAW), 26 to 48 (WWFA…LYAS), 76 to 98 (YILP…GWVL), and 110 to 132 (YSLL…RQIT).

The protein belongs to the OpgB family.

It localises to the cell inner membrane. It catalyses the reaction a phosphatidylglycerol + a membrane-derived-oligosaccharide D-glucose = a 1,2-diacyl-sn-glycerol + a membrane-derived-oligosaccharide 6-(glycerophospho)-D-glucose.. The protein operates within glycan metabolism; osmoregulated periplasmic glucan (OPG) biosynthesis. Its function is as follows. Transfers a phosphoglycerol residue from phosphatidylglycerol to the membrane-bound nascent glucan backbones. This Salmonella typhi protein is Phosphoglycerol transferase I.